Here is a 310-residue protein sequence, read N- to C-terminus: Putative S-adenosyl-L-methionine-dependent methyltransferase MAB_4587c (310 aa).

S-adenosyl-L-methionine is bound by residues Asp126 and 155-156; that span reads DL.

It belongs to the UPF0677 family.

Its function is as follows. Exhibits S-adenosyl-L-methionine-dependent methyltransferase activity. In Mycobacteroides abscessus (strain ATCC 19977 / DSM 44196 / CCUG 20993 / CIP 104536 / JCM 13569 / NCTC 13031 / TMC 1543 / L948) (Mycobacterium abscessus), this protein is Putative S-adenosyl-L-methionine-dependent methyltransferase MAB_4587c.